The chain runs to 535 residues: Formate--tetrahydrofolate ligase (535 aa).

Residue 50-57 coordinates ATP; that stretch reads TPAGEGKT.

The protein belongs to the formate--tetrahydrofolate ligase family.

The enzyme catalyses (6S)-5,6,7,8-tetrahydrofolate + formate + ATP = (6R)-10-formyltetrahydrofolate + ADP + phosphate. Its pathway is one-carbon metabolism; tetrahydrofolate interconversion. This Picrophilus torridus (strain ATCC 700027 / DSM 9790 / JCM 10055 / NBRC 100828 / KAW 2/3) protein is Formate--tetrahydrofolate ligase.